A 152-amino-acid polypeptide reads, in one-letter code: Holo-[acyl-carrier-protein] synthase (152 aa).

Residues aspartate 7 and glutamate 60 each contribute to the Mg(2+) site.

It belongs to the P-Pant transferase superfamily. AcpS family. The cofactor is Mg(2+).

It localises to the cytoplasm. The enzyme catalyses apo-[ACP] + CoA = holo-[ACP] + adenosine 3',5'-bisphosphate + H(+). Transfers the 4'-phosphopantetheine moiety from coenzyme A to a Ser of acyl-carrier-protein. This Bifidobacterium adolescentis (strain ATCC 15703 / DSM 20083 / NCTC 11814 / E194a) protein is Holo-[acyl-carrier-protein] synthase.